Consider the following 421-residue polypeptide: 3-hydroxy-3-methylglutaryl-coenzyme A reductase (421 aa).

Residues E109, K240, and D315 each act as charge relay system in the active site. H410 serves as the catalytic Proton donor.

Belongs to the HMG-CoA reductase family.

The catalysed reaction is (R)-mevalonate + 2 NADP(+) + CoA = (3S)-3-hydroxy-3-methylglutaryl-CoA + 2 NADPH + 2 H(+). It participates in metabolic intermediate biosynthesis; (R)-mevalonate biosynthesis; (R)-mevalonate from acetyl-CoA: step 3/3. In terms of biological role, converts HMG-CoA to mevalonate. This Aeropyrum pernix (strain ATCC 700893 / DSM 11879 / JCM 9820 / NBRC 100138 / K1) protein is 3-hydroxy-3-methylglutaryl-coenzyme A reductase (hmgA).